Here is a 445-residue protein sequence, read N- to C-terminus: Putative diacyglycerol O-acyltransferase Rv2285 (445 aa).

The active-site Proton acceptor is the His-135.

This sequence belongs to the long-chain O-acyltransferase family.

It catalyses the reaction an acyl-CoA + a 1,2-diacyl-sn-glycerol = a triacyl-sn-glycerol + CoA. It carries out the reaction di-(9Z)-octadecenoylglycerol + (9Z)-octadecenoyl-CoA = 1,2,3-tri-(9Z-octadecenoyl)-glycerol + CoA. It participates in glycerolipid metabolism; triacylglycerol biosynthesis. Catalyzes the terminal and only committed step in triacylglycerol synthesis by using diacylglycerol and fatty acyl CoA as substrates. Required for storage lipid synthesis. Its function is as follows. Upon expression in E.coli functions weakly as a triacylglycerol synthase, making triacylglycerol (TG) from diolein and long-chain fatty acyl-CoA. Has very weak wax synthase activity, incorporating palmityl alcohol into wax esters in the presence of palmitoyl-CoA. This is Putative diacyglycerol O-acyltransferase Rv2285 from Mycobacterium tuberculosis (strain ATCC 25618 / H37Rv).